Consider the following 128-residue polypeptide: Small ribosomal subunit protein uS12 (128 aa).

Residues 1–24 (MPTFNQLVKYGREKRKKKSKAPAL) are disordered. A 3-methylthioaspartic acid modification is found at Asp89. Residues 105-128 (AGVEGRRQSRSKYGTKRPKEEKGG) are disordered.

The protein belongs to the universal ribosomal protein uS12 family. Part of the 30S ribosomal subunit. Contacts proteins S8 and S17. May interact with IF1 in the 30S initiation complex.

With S4 and S5 plays an important role in translational accuracy. In terms of biological role, interacts with and stabilizes bases of the 16S rRNA that are involved in tRNA selection in the A site and with the mRNA backbone. Located at the interface of the 30S and 50S subunits, it traverses the body of the 30S subunit contacting proteins on the other side and probably holding the rRNA structure together. The combined cluster of proteins S8, S12 and S17 appears to hold together the shoulder and platform of the 30S subunit. This chain is Small ribosomal subunit protein uS12, found in Aquifex aeolicus (strain VF5).